The chain runs to 378 residues: 3-dehydroquinate synthase (378 aa).

Residues 111 to 115 (GVIGD), 135 to 136 (TS), Lys-148, and Lys-157 contribute to the NAD(+) site. Zn(2+) is bound by residues Glu-190, His-252, and His-271.

It belongs to the sugar phosphate cyclases superfamily. Dehydroquinate synthase family. The cofactor is NAD(+). It depends on Co(2+) as a cofactor. Requires Zn(2+) as cofactor.

It localises to the cytoplasm. The enzyme catalyses 7-phospho-2-dehydro-3-deoxy-D-arabino-heptonate = 3-dehydroquinate + phosphate. It functions in the pathway metabolic intermediate biosynthesis; chorismate biosynthesis; chorismate from D-erythrose 4-phosphate and phosphoenolpyruvate: step 2/7. In terms of biological role, catalyzes the conversion of 3-deoxy-D-arabino-heptulosonate 7-phosphate (DAHP) to dehydroquinate (DHQ). In Mesorhizobium japonicum (strain LMG 29417 / CECT 9101 / MAFF 303099) (Mesorhizobium loti (strain MAFF 303099)), this protein is 3-dehydroquinate synthase.